A 108-amino-acid polypeptide reads, in one-letter code: Large ribosomal subunit protein P1 (108 aa).

Residues 67-108 form a disordered region; that stretch reads PAAAPAEAGGEEKKEEEKKEEEEKEEEVSEEEALAGLSALFG. The segment covering 84 to 99 has biased composition (acidic residues); sequence KKEEEEKEEEVSEEEA.

This sequence belongs to the eukaryotic ribosomal protein P1/P2 family. In terms of assembly, part of the 50S ribosomal subunit. Homodimer, it forms part of the ribosomal stalk which helps the ribosome interact with GTP-bound translation factors. Forms a heptameric uL10/P0(P1)2(P1)2(P1)2 complex, where uL10/P0 forms an elongated spine to which the P1 dimers bind in a sequential fashion.

Its function is as follows. Forms part of the ribosomal stalk, playing a central role in the interaction of the ribosome with GTP-bound translation factors. The stalk complex of P.horikoshii binds to E.coli large subunits and confers on them the ability to interact with eukaryotic elongation factors. Each succesive P1 dimer bound along the P0 spine increases the GTPase activity of elongation factors and increases translation by reconsituted ribosomes. This Pyrococcus horikoshii (strain ATCC 700860 / DSM 12428 / JCM 9974 / NBRC 100139 / OT-3) protein is Large ribosomal subunit protein P1.